We begin with the raw amino-acid sequence, 212 residues long: tRNA (guanine-N(7)-)-methyltransferase (212 aa).

Glu44, Asp69, Asp96, and Asp118 together coordinate S-adenosyl-L-methionine. Asp118 is a catalytic residue. Position 122 (Lys122) interacts with substrate. An interaction with RNA region spans residues 124 to 129 (RHEKRR). Substrate contacts are provided by residues Asp154 and 191-194 (TEYE).

Belongs to the class I-like SAM-binding methyltransferase superfamily. TrmB family.

The catalysed reaction is guanosine(46) in tRNA + S-adenosyl-L-methionine = N(7)-methylguanosine(46) in tRNA + S-adenosyl-L-homocysteine. Its pathway is tRNA modification; N(7)-methylguanine-tRNA biosynthesis. Functionally, catalyzes the formation of N(7)-methylguanine at position 46 (m7G46) in tRNA. The chain is tRNA (guanine-N(7)-)-methyltransferase from Streptococcus gordonii (strain Challis / ATCC 35105 / BCRC 15272 / CH1 / DL1 / V288).